Consider the following 320-residue polypeptide: Cell division protein FtsQ (320 aa).

Residues 1–24 (MAQTIKRGGKGVRRATAARSAQRK) are disordered. Topologically, residues 1-52 (MAQTIKRGGKGVRRATAARSAQRKVQTARQQTGSVLDSVLRWLPFSEETLHR) are cytoplasmic. A helical transmembrane segment spans residues 53-73 (ILMTLILAAAAGLVWTVAVMA). Over 74 to 320 (GIPALVSEQA…RAASAKSDEG (247 aa)) the chain is Periplasmic. The region spanning 92 to 160 (FKVSHLEVRG…DTLVIDIVER (69 aa)) is the POTRA domain. A disordered region spans residues 296-320 (AAEKRAEEQARAEAKRAASAKSDEG).

Belongs to the FtsQ/DivIB family. FtsQ subfamily.

It localises to the cell inner membrane. Its function is as follows. Essential cell division protein. The chain is Cell division protein FtsQ from Novosphingobium aromaticivorans (strain ATCC 700278 / DSM 12444 / CCUG 56034 / CIP 105152 / NBRC 16084 / F199).